Here is a 797-residue protein sequence, read N- to C-terminus: Discoidin domain-containing receptor tyrosine kinase B (797 aa).

The N-terminal stretch at 1–19 (MKLLLYLFGVTFHSNTVVA) is a signal peptide. At 20–384 (LELRECSHQL…VTEHDDGTSM (365 aa)) the chain is on the extracellular side. Residues 25 to 181 (CSHQLGMSNR…VCMRVEVFGC (157 aa)) form the F5/8 type C domain. A disulfide bridge connects residues Cys-25 and Cys-181. Residues 46 to 66 (SFDLQSTGPQHARAHQESGSG) form a disordered region. 4 N-linked (GlcNAc...) asparagine glycosylation sites follow: Asn-141, Asn-167, Asn-264, and Asn-353. A helical transmembrane segment spans residues 385–405 (FAFIIFFFMFLIVAVIILTVL). At 406–797 (YRKREYRVKA…LVHTSPHIHF (392 aa)) the chain is on the cytoplasmic side. The 259-residue stretch at 527 to 785 (LICVSRIGQG…PSFENVHLHL (259 aa)) folds into the Protein kinase domain. Residues 533–541 (IGQGEFGEV) and Lys-554 each bind ATP. Asp-645 (proton acceptor) is an active-site residue.

The protein belongs to the protein kinase superfamily. Tyr protein kinase family. Insulin receptor subfamily. Interacts with shc-1. In terms of processing, autophosphorylated on tyrosine residues. Post-translationally, N-glycosylation at Asn-141 is required for axon regeneration after injury but is dispensable for kinase activity and axon localization. As to expression, expressed in some neurons in head and tail, some motoneurons in ventral nerve cord, in PVP interneurons, seam cells, rectal gland cells, vulva cells and some non-neuronal cells in the tail. Expressed in D-type motor neurons.

It localises to the cell membrane. The protein localises to the cell projection. Its subcellular location is the axon. It is found in the perikaryon. It carries out the reaction L-tyrosyl-[protein] + ATP = O-phospho-L-tyrosyl-[protein] + ADP + H(+). In terms of biological role, tyrosine-protein kinase receptor which, together with ddr-1, is involved in axon guidance to establish the tracts for the ventral and dorsal nerve cords during nervous system development. Acts upstream of the adapter shc-1, and the tyrosine kinase receptors svh-1 and svh-2 to regulate axon regeneration following injury in D-type motor neurons. May mediate axon regeneration in association with the collagen emb-9. The protein is Discoidin domain-containing receptor tyrosine kinase B of Caenorhabditis elegans.